The chain runs to 322 residues: Lipoyl synthase (322 aa).

The segment covering 1–12 has biased composition (polar residues); that stretch reads MVTVLNTVNQSG. The disordered stretch occupies residues 1–22; it reads MVTVLNTVNQSGRLRHPEKAHR. [4Fe-4S] cluster is bound by residues C60, C65, C71, C86, C90, C93, and S299. Residues 72 to 288 form the Radical SAM core domain; the sequence is WEKKHATFMI…ETIGKTKGFL (217 aa).

It belongs to the radical SAM superfamily. Lipoyl synthase family. It depends on [4Fe-4S] cluster as a cofactor.

The protein localises to the cytoplasm. The catalysed reaction is [[Fe-S] cluster scaffold protein carrying a second [4Fe-4S](2+) cluster] + N(6)-octanoyl-L-lysyl-[protein] + 2 oxidized [2Fe-2S]-[ferredoxin] + 2 S-adenosyl-L-methionine + 4 H(+) = [[Fe-S] cluster scaffold protein] + N(6)-[(R)-dihydrolipoyl]-L-lysyl-[protein] + 4 Fe(3+) + 2 hydrogen sulfide + 2 5'-deoxyadenosine + 2 L-methionine + 2 reduced [2Fe-2S]-[ferredoxin]. The protein operates within protein modification; protein lipoylation via endogenous pathway; protein N(6)-(lipoyl)lysine from octanoyl-[acyl-carrier-protein]: step 2/2. In terms of biological role, catalyzes the radical-mediated insertion of two sulfur atoms into the C-6 and C-8 positions of the octanoyl moiety bound to the lipoyl domains of lipoate-dependent enzymes, thereby converting the octanoylated domains into lipoylated derivatives. This is Lipoyl synthase from Brucella abortus (strain S19).